The primary structure comprises 155 residues: SsrA-binding protein (155 aa).

The protein belongs to the SmpB family.

It localises to the cytoplasm. Required for rescue of stalled ribosomes mediated by trans-translation. Binds to transfer-messenger RNA (tmRNA), required for stable association of tmRNA with ribosomes. tmRNA and SmpB together mimic tRNA shape, replacing the anticodon stem-loop with SmpB. tmRNA is encoded by the ssrA gene; the 2 termini fold to resemble tRNA(Ala) and it encodes a 'tag peptide', a short internal open reading frame. During trans-translation Ala-aminoacylated tmRNA acts like a tRNA, entering the A-site of stalled ribosomes, displacing the stalled mRNA. The ribosome then switches to translate the ORF on the tmRNA; the nascent peptide is terminated with the 'tag peptide' encoded by the tmRNA and targeted for degradation. The ribosome is freed to recommence translation, which seems to be the essential function of trans-translation. The protein is SsrA-binding protein of Bacillus cereus (strain B4264).